The primary structure comprises 205 residues: Dephospho-CoA kinase (205 aa).

Residues 6–205 (RIGLTGGIAA…EIYAGWCAGR (200 aa)) form the DPCK domain. 14–19 (AAGKST) provides a ligand contact to ATP.

The protein belongs to the CoaE family.

The protein localises to the cytoplasm. It catalyses the reaction 3'-dephospho-CoA + ATP = ADP + CoA + H(+). The protein operates within cofactor biosynthesis; coenzyme A biosynthesis; CoA from (R)-pantothenate: step 5/5. In terms of biological role, catalyzes the phosphorylation of the 3'-hydroxyl group of dephosphocoenzyme A to form coenzyme A. In Bifidobacterium longum (strain NCC 2705), this protein is Dephospho-CoA kinase.